Consider the following 401-residue polypeptide: MQTLAGKKILLGISGGIAAYKCADLTRRLKERGAEVQVVMTKAAKEFITPLTMQAVSGRPVSDSLLDPAAEASMGHIELAKWADLILLAPATADLIARMAAGMGNDLLTTLVLATDAPVAVSPAMNQQMYRNVATQENIATLSRRGMEIWGPAAGEQACGDVGPGRMLEPMQLVALCEQFFQPKPLQDKSILITAGPTREAIDPVRYITNHSSGKMGYALAQAAMQLGANVTLVSGPVSLPTPVNVNRINVDSAQEMYDAVMAQASDHDIFISCAAVADYRPATIAEQKLKKTDDSDEMTITMVKNPDIVASVSAMTENRPFTVGFAAETNDVEVYARRKLEKKKLDLLCANDVSVEGQGFNSSDNAITLYWPQGEKALPLNSKAALSMEILKQIQTLMGH.

The interval 1-190 is phosphopantothenoylcysteine decarboxylase; that stretch reads MQTLAGKKIL…FQPKPLQDKS (190 aa). Cysteine 159 (proton donor) is an active-site residue. Residues 191–401 form a phosphopantothenate--cysteine ligase region; that stretch reads ILITAGPTRE…LKQIQTLMGH (211 aa). CTP is bound by residues aspartate 279, lysine 289, 307 to 310, phenylalanine 326, lysine 340, and lysine 344; that span reads PDIV.

In the N-terminal section; belongs to the HFCD (homo-oligomeric flavin containing Cys decarboxylase) superfamily. The protein in the C-terminal section; belongs to the PPC synthetase family. It depends on Mg(2+) as a cofactor. FMN is required as a cofactor.

The catalysed reaction is N-[(R)-4-phosphopantothenoyl]-L-cysteine + H(+) = (R)-4'-phosphopantetheine + CO2. It catalyses the reaction (R)-4'-phosphopantothenate + L-cysteine + CTP = N-[(R)-4-phosphopantothenoyl]-L-cysteine + CMP + diphosphate + H(+). The protein operates within cofactor biosynthesis; coenzyme A biosynthesis; CoA from (R)-pantothenate: step 2/5. Its pathway is cofactor biosynthesis; coenzyme A biosynthesis; CoA from (R)-pantothenate: step 3/5. Catalyzes two sequential steps in the biosynthesis of coenzyme A. In the first step cysteine is conjugated to 4'-phosphopantothenate to form 4-phosphopantothenoylcysteine. In the second step the latter compound is decarboxylated to form 4'-phosphopantotheine. The chain is Coenzyme A biosynthesis bifunctional protein CoaBC from Vibrio vulnificus (strain YJ016).